The chain runs to 931 residues: GPI ethanolamine phosphate transferase 1 (931 aa).

Met1 is a topological domain (cytoplasmic). The chain crosses the membrane as a helical span at residues 2-22 (LLFFALGLLIHFVFFASIFDI). Residues 23-442 (YFTSPLVHGM…SYYHTYDRLF (420 aa)) are Lumenal-facing. N-linked (GlcNAc...) asparagine glycosylation is found at Asn128, Asn192, Asn295, and Asn350. Residues 443–463 (LGINVAVGFVGWMSYTSLLII) traverse the membrane as a helical segment. The Cytoplasmic segment spans residues 464-480 (KSHSNIPKGTRKEGKKP). A helical transmembrane segment spans residues 481–501 (HCLLLYSFIATGVLVACFLMI). Gln502 is a topological domain (lumenal). Residues 503 to 523 (ACPWTYYVYCLLPVPIWYAVL) traverse the membrane as a helical segment. The Cytoplasmic portion of the chain corresponds to 524-543 (REHEVIQDLVESLLTFPRSH). The chain crosses the membrane as a helical span at residues 544–564 (FVAYLLVFTLGIEVLVLSFFY). Residue Arg565 is a topological domain, lumenal. The helical transmembrane segment at 566–586 (YMLTAGLIVFAGWPFLTQLWT) threads the bilayer. The Cytoplasmic portion of the chain corresponds to 587–591 (RAKIT). Residues 592–612 (FLSWAFFSLLLAVFPLMPVVG) form a helical membrane-spanning segment. At 613 to 618 (RKPNLS) the chain is on the lumenal side. Asn616 carries an N-linked (GlcNAc...) asparagine glycan. A helical transmembrane segment spans residues 619–639 (LVMGAGFLVLLLSLAVVTTLG). The Cytoplasmic portion of the chain corresponds to 640–649 (KRNIKLVKGE). Residues 650–670 (LLVLLLQMLSTVLSMYVVYST) form a helical membrane-spanning segment. The Lumenal portion of the chain corresponds to 671–685 (HHSLLKKEGLPLMNQ). The helical transmembrane segment at 686–706 (IVSWATLASSLVAPLLSSTAL) threads the bilayer. Over 707-723 (SQRLASILLSLMSTYLL) the chain is Cytoplasmic. A helical membrane pass occupies residues 724 to 744 (LSTGYEALFPLVLSCLMFVWI). The Lumenal portion of the chain corresponds to 745–786 (QVEQETLQQPGVSCKQKLTSIQFTCDTDIAQFRQLCPDDIRR). A helical membrane pass occupies residues 787–807 (AFFLVFFLLTAFFGTGNIASI). At 808-824 (NSFDLASVYCFLTVFSP) the chain is on the cytoplasmic side. Residues 825-845 (FMMGALMMWKILIPFVLVMCA) traverse the membrane as a helical segment. Residues 846–858 (FEAVQITTQLSSK) lie on the Lumenal side of the membrane. The chain crosses the membrane as a helical span at residues 859–879 (GLFLVVLIISDIMALHFFFLV). The Cytoplasmic segment spans residues 880–894 (KDSGSWLDIGTSISH). A helical membrane pass occupies residues 895–915 (YVIVMSMTIFLVFLNGLAQLL). Residues 916–931 (TTKKLQLCGKPKSHLM) are Lumenal-facing.

It belongs to the PIGG/PIGN/PIGO family. PIGN subfamily.

The protein resides in the endoplasmic reticulum membrane. It participates in glycolipid biosynthesis; glycosylphosphatidylinositol-anchor biosynthesis. Its function is as follows. Ethanolamine phosphate transferase that catalyzes an ethanolamine phosphate (EtNP) transfer from phosphatidylethanolamine (PE) to the 2-OH position of the first alpha-1,4-linked mannose of the alpha-D-Man-(1-&gt;6)-alpha-D-Man-(1-&gt;4)-alpha-D-GlcN-(1-&gt;6)-(1-radyl,2-acyl-sn-glycero-3-phospho)-2-acyl-inositol (also termed H3) intermediate to generate an alpha-D-Man-(1-&gt;6)-2-PEtn-alpha-D-Man-(1-&gt;4)-alpha-D-GlcN-(1-&gt;6)-(1-radyl,2-acyl-sn-glycero-3-phospho)-2-acyl-inositol and participates in the eighth step of the glycosylphosphatidylinositol-anchor biosynthesis. May act as suppressor of replication stress and chromosome missegregation. The chain is GPI ethanolamine phosphate transferase 1 from Mus musculus (Mouse).